We begin with the raw amino-acid sequence, 882 residues long: Kelch repeat-containing protein 2 (882 aa).

A disordered region spans residues 41-60 (TPTLPPNQHRGISGASTALP). Kelch repeat units lie at residues 99 to 143 (RIFV…PPRV), 153 to 207 (AYVV…IIAS), 213 to 267 (KLYL…AYDN), 268 to 317 (KLWV…VYKH), 319 to 369 (MCVL…LMKN), and 371 to 417 (KLLI…LCPG). T455 is subject to Phosphothreonine. Over residues 480–496 (LDDKAFERKSDREEKKP) the composition is skewed to basic and acidic residues. The disordered stretch occupies residues 480 to 516 (LDDKAFERKSDREEKKPQSSKVDSSINKESPGTGIKV). Residues 498–509 (SSKVDSSINKES) show a composition bias toward polar residues. A Phosphoserine modification is found at S509. 2 coiled-coil regions span residues 550 to 685 (KNLF…QKIT) and 728 to 881 (NKIE…LEQK).

In terms of assembly, interacts with KEL1.

This Saccharomyces cerevisiae (strain ATCC 204508 / S288c) (Baker's yeast) protein is Kelch repeat-containing protein 2 (KEL2).